We begin with the raw amino-acid sequence, 162 residues long: Caveolin-2 (162 aa).

Over 1–86 (MGLETEKADV…FEISKYVMYK (86 aa)) the chain is Cytoplasmic. Tyr-19 carries the post-translational modification Phosphotyrosine; by SRC. Ser-20 and Ser-23 each carry phosphoserine. The residue at position 27 (Tyr-27) is a Phosphotyrosine; by SRC. At Ser-36 the chain carries Phosphoserine. The segment at residues 87-107 (FLTVFLAIPLAFIAGILFATL) is an intramembrane region (helical). Over 108–162 (SCLHIWILMPFVKTCLMVLPSVQTIWKSVTDVFIAPLCTSIGRSFSSVSLQLSQD) the chain is Cytoplasmic.

The protein belongs to the caveolin family. In terms of assembly, monomer or homodimer. Interacts with CAV1; the interaction forms a stable heterooligomeric complex that is required for targeting to lipid rafts and for caveolae formation. Tyrosine phosphorylated forms do not form heterooligomers with the Tyr-19-phosphorylated form existing as a monomer or dimer, and the Tyr-27-form as a monomer only. Interacts (tyrosine phosphorylated form) with the SH2 domain-containing proteins, RASA1, NCK1 and SRC. Interacts (tyrosine phosphorylated form) with INSR, the interaction (Tyr-27-phosphorylated form) is increased on insulin stimulation. Interacts (Tyr-19 phosphorylated form) with MAPK1 (phosphorylated form); the interaction, promoted by insulin, leads to nuclear location and MAPK1 activation. Interacts with STAT3; the interaction is increased on insulin-induced tyrosine phosphorylation leading to STAT activation. In terms of processing, phosphorylated on serine and tyrosine residues. CAV1 promotes phosphorylation on Ser-23 which then targets the complex to the plasma membrane, lipid rafts and caveolae. Phosphorylation on Ser-36 appears to modulate mitosis in endothelial cells. Phosphorylation on both Tyr-19 and Tyr-27 is required for insulin-induced 'Ser-727' phosphorylation of STAT3 and its activation. Phosphorylation on Tyr-19 is required for insulin-induced phosphorylation of MAPK1 and DNA binding of STAT3. Tyrosine phosphorylation is induced by both EGF and insulin (By. similarity).

It localises to the nucleus. The protein localises to the cytoplasm. It is found in the golgi apparatus membrane. Its subcellular location is the cell membrane. The protein resides in the membrane. It localises to the caveola. In terms of biological role, may act as a scaffolding protein within caveolar membranes. Interacts directly with G-protein alpha subunits and can functionally regulate their activity. Acts as an accessory protein in conjunction with CAV1 in targeting to lipid rafts and driving caveolae formation. The Ser-36 phosphorylated form has a role in modulating mitosis in endothelial cells. Positive regulator of cellular mitogenesis of the MAPK signaling pathway. Required for the insulin-stimulated nuclear translocation and activation of MAPK1 and STAT3, and the subsequent regulation of cell cycle progression. This Papio anubis (Olive baboon) protein is Caveolin-2 (CAV2).